Here is a 215-residue protein sequence, read N- to C-terminus: Peroxiredoxin 1 (215 aa).

A Thioredoxin domain is found at V2 to V158. Residue C46 is the Cysteine sulfenic acid (-SOH) intermediate of the active site. R121 provides a ligand contact to substrate.

Belongs to the peroxiredoxin family. Prx6 subfamily. In terms of assembly, homodecamer. Pentamer of dimers that assemble into a ring structure.

It localises to the cytoplasm. It carries out the reaction a hydroperoxide + [thioredoxin]-dithiol = an alcohol + [thioredoxin]-disulfide + H2O. Its function is as follows. Thiol-specific peroxidase that catalyzes the reduction of hydrogen peroxide and organic hydroperoxides to water and alcohols, respectively. Plays a role in cell protection against oxidative stress by detoxifying peroxides. This Sulfurisphaera tokodaii (strain DSM 16993 / JCM 10545 / NBRC 100140 / 7) (Sulfolobus tokodaii) protein is Peroxiredoxin 1.